Reading from the N-terminus, the 166-residue chain is Spiderine-1b (166 aa).

Positions 1 to 18 are cleaved as a signal peptide; that stretch reads MKFALVLLGICAFYLVNA. A propeptide spans 19-58 (removed in mature form); it reads TGDLETELEASELQELQEALDLIGETSLESLEAEELEEAR. The segment at 59–99 is linear cationic cytotoxin domain; the sequence is KFKWGKLFSAAKKLYKKGKKLSKNKNFKKALKFGKQLAKNL. Residues 113-166 enclose the Oxytoxin-type inhibitor cystine knot (ICK) domain; the sequence is NNKCWAIGTTCSDDCDCCPEHHCHCPAGKWLPGLFRCTCQVTESDKVNKCPPAE. Disulfide bonds link C116/C130, C123/C135, C127/C162, C129/C151, and C137/C149.

It belongs to the spiderine family. Cationic/spiderine subfamily. In terms of tissue distribution, expressed by the venom gland.

The protein localises to the secreted. Its function is as follows. Has antimicrobial, insecticidal, cytolytic and cytotoxic activity. The protein is Spiderine-1b of Oxyopes takobius (Lynx spider).